A 514-amino-acid chain; its full sequence is 2,3-bisphosphoglycerate-independent phosphoglycerate mutase (514 aa).

Aspartate 14 and serine 64 together coordinate Mn(2+). The active-site Phosphoserine intermediate is the serine 64. Residues histidine 125, 155 to 156, arginine 187, arginine 193, 263 to 266, and lysine 337 each bind substrate; these read RD and RADR. Aspartate 404, histidine 408, aspartate 445, histidine 446, and histidine 463 together coordinate Mn(2+).

It belongs to the BPG-independent phosphoglycerate mutase family. As to quaternary structure, monomer. It depends on Mn(2+) as a cofactor.

It carries out the reaction (2R)-2-phosphoglycerate = (2R)-3-phosphoglycerate. It participates in carbohydrate degradation; glycolysis; pyruvate from D-glyceraldehyde 3-phosphate: step 3/5. Its function is as follows. Catalyzes the interconversion of 2-phosphoglycerate and 3-phosphoglycerate. This Hahella chejuensis (strain KCTC 2396) protein is 2,3-bisphosphoglycerate-independent phosphoglycerate mutase.